The chain runs to 462 residues: Cysteine--tRNA ligase (462 aa).

Cysteine 29 serves as a coordination point for Zn(2+). Residues 31–41 (PTVYDHAHIGN) carry the 'HIGH' region motif. Residues cysteine 214, histidine 239, and glutamate 243 each contribute to the Zn(2+) site. The 'KMSKS' region motif lies at 272–276 (KMSKS). Lysine 275 contacts ATP.

The protein belongs to the class-I aminoacyl-tRNA synthetase family. In terms of assembly, monomer. It depends on Zn(2+) as a cofactor.

The protein localises to the cytoplasm. It catalyses the reaction tRNA(Cys) + L-cysteine + ATP = L-cysteinyl-tRNA(Cys) + AMP + diphosphate. This chain is Cysteine--tRNA ligase, found in Xanthobacter autotrophicus (strain ATCC BAA-1158 / Py2).